We begin with the raw amino-acid sequence, 210 residues long: High-affinity nitrate transporter 3.1 (210 aa).

The first 22 residues, 1–22, serve as a signal peptide directing secretion; sequence MAIQKILFASLLICSLIQSIHG. Residues 178 to 198 form a helical membrane-spanning segment; it reads LDIASICFSVFSVVALVVFFV.

The protein belongs to the NAR2 family. Heterotetramer composed of two NRT2.1 and two NRT3.1. Interacts with NRT2.1 and NRT2.3. Interacts with all other NRT2 transporters, including NRT2.5. Highly expressed in roots. Detected in shoots.

The protein resides in the cell membrane. Functionally, acts as a dual component transporter with NTR2.1. Required for high-affinity nitrate transport. Acts as a repressor of lateral root initiation. May be involved in targeting NRT2 proteins to the plasma membrane. In Arabidopsis thaliana (Mouse-ear cress), this protein is High-affinity nitrate transporter 3.1 (NRT3.1).